We begin with the raw amino-acid sequence, 276 residues long: NADPH-dependent 7-cyano-7-deazaguanine reductase (276 aa).

Residue Ile83–Ser85 participates in substrate binding. Ser85–Lys86 provides a ligand contact to NADPH. The active-site Thioimide intermediate is Cys184. Residue Asp191 is the Proton donor of the active site. His223–Glu224 is a substrate binding site. Arg252–Gly253 contributes to the NADPH binding site.

This sequence belongs to the GTP cyclohydrolase I family. QueF type 2 subfamily. Homodimer.

Its subcellular location is the cytoplasm. It carries out the reaction 7-aminomethyl-7-carbaguanine + 2 NADP(+) = 7-cyano-7-deazaguanine + 2 NADPH + 3 H(+). The protein operates within tRNA modification; tRNA-queuosine biosynthesis. Catalyzes the NADPH-dependent reduction of 7-cyano-7-deazaguanine (preQ0) to 7-aminomethyl-7-deazaguanine (preQ1). The sequence is that of NADPH-dependent 7-cyano-7-deazaguanine reductase from Pseudomonas syringae pv. tomato (strain ATCC BAA-871 / DC3000).